The chain runs to 1856 residues: Autophagy-related protein 2 (1856 aa).

Disordered regions lie at residues 123-167, 229-283, 309-328, 395-428, 1157-1177, 1614-1647, and 1719-1741; these read NTND…TGNK, LRTL…GNES, KSAASGIPGEVDNKATDKED, TKSRSAQRNEKFPQYTNDNDEIPEDQSESDDASH, LNGTENGSTSESSSQEASSLM, MLGGEGSSVRSPNLGGSDNRRNSNASDELPVEVA, and KLQPHTKGNHEGLTEEEEDEDED. Positions 137–147 are enriched in acidic residues; that stretch reads ASEDDDEDDID. Positions 250–262 are enriched in polar residues; that stretch reads KKQQGSDNDSPTD. Positions 270–280 are enriched in acidic residues; sequence NDNDDDDDDYG. The span at 412 to 424 shows a compositional bias: acidic residues; it reads DNDEIPEDQSESD. Low complexity predominate over residues 1157–1170; that stretch reads LNGTENGSTSESSS. Polar residues predominate over residues 1621-1639; the sequence is SVRSPNLGGSDNRRNSNAS. Over residues 1732–1741 the composition is skewed to acidic residues; that stretch reads TEEEEDEDED.

Belongs to the ATG2 family.

It localises to the preautophagosomal structure membrane. The protein localises to the endoplasmic reticulum membrane. It carries out the reaction a 1,2-diacyl-sn-glycero-3-phosphocholine(in) = a 1,2-diacyl-sn-glycero-3-phosphocholine(out). The enzyme catalyses a 1,2-diacyl-sn-glycero-3-phospho-L-serine(in) = a 1,2-diacyl-sn-glycero-3-phospho-L-serine(out). It catalyses the reaction a 1,2-diacyl-sn-glycero-3-phosphoethanolamine(in) = a 1,2-diacyl-sn-glycero-3-phosphoethanolamine(out). Lipid transfer protein required for autophagosome completion and peroxisome degradation. Tethers the edge of the isolation membrane (IM) to the endoplasmic reticulum (ER) and mediates direct lipid transfer from ER to IM for IM expansion. ATG2/SPO72 binds to the ER exit site (ERES), which is the membrane source for autophagosome formation, using basic residues in its N-terminal region (NR) and to the expanding edge of the IM through its C-terminal region. The latter binding is assisted by an ATG18-PtdIns3P interaction. ATG2/SPO72 then extracts phospholipids from the membrane source using its NR and transfers them to ATG9 to the IM through its predicted beta-sheet-rich structure for membrane expansion. This chain is Autophagy-related protein 2 (SPO72), found in Candida albicans (strain SC5314 / ATCC MYA-2876) (Yeast).